Reading from the N-terminus, the 72-residue chain is Large ribosomal subunit protein bL31 (72 aa).

Belongs to the bacterial ribosomal protein bL31 family. Type A subfamily. As to quaternary structure, part of the 50S ribosomal subunit.

In terms of biological role, binds the 23S rRNA. This chain is Large ribosomal subunit protein bL31, found in Rhodospirillum rubrum (strain ATCC 11170 / ATH 1.1.1 / DSM 467 / LMG 4362 / NCIMB 8255 / S1).